Consider the following 442-residue polypeptide: Glutamyl-tRNA reductase (442 aa).

Substrate contacts are provided by residues 49–52, Ser-109, 114–116, and Gln-120; these read TCNR and EGQ. Cys-50 acts as the Nucleophile in catalysis. Position 198-203 (198-203) interacts with NADP(+); that stretch reads GAGRMA. The tract at residues 420–442 is disordered; the sequence is MAAAQRLFDLPGDDADRDRSDAK. Basic and acidic residues predominate over residues 433-442; that stretch reads DADRDRSDAK.

This sequence belongs to the glutamyl-tRNA reductase family. As to quaternary structure, homodimer.

The catalysed reaction is (S)-4-amino-5-oxopentanoate + tRNA(Glu) + NADP(+) = L-glutamyl-tRNA(Glu) + NADPH + H(+). It functions in the pathway porphyrin-containing compound metabolism; protoporphyrin-IX biosynthesis; 5-aminolevulinate from L-glutamyl-tRNA(Glu): step 1/2. Its pathway is porphyrin-containing compound metabolism; chlorophyll biosynthesis. In terms of biological role, catalyzes the NADPH-dependent reduction of glutamyl-tRNA(Glu) to glutamate 1-semialdehyde (GSA). The polypeptide is Glutamyl-tRNA reductase (Synechococcus sp. (strain RCC307)).